A 382-amino-acid chain; its full sequence is Histidine biosynthesis bifunctional protein HisB (382 aa).

The interval 1–190 is histidinol-phosphatase; it reads MQKIVFIDRD…EIYEFLRLPA (190 aa). The active-site Nucleophile is the Asp-8. Mg(2+)-binding residues include Asp-8, Asp-10, and Asp-129. Asp-10 serves as the catalytic Proton donor. The segment at 191 to 382 is imidazoleglycerol-phosphate dehydratase; that stretch reads RTALVERNTK…DNLPSTKGVL (192 aa).

This sequence in the N-terminal section; belongs to the histidinol-phosphatase family. The protein in the C-terminal section; belongs to the imidazoleglycerol-phosphate dehydratase family. The cofactor is Mg(2+).

It is found in the cytoplasm. It carries out the reaction D-erythro-1-(imidazol-4-yl)glycerol 3-phosphate = 3-(imidazol-4-yl)-2-oxopropyl phosphate + H2O. It catalyses the reaction L-histidinol phosphate + H2O = L-histidinol + phosphate. It participates in amino-acid biosynthesis; L-histidine biosynthesis; L-histidine from 5-phospho-alpha-D-ribose 1-diphosphate: step 6/9. It functions in the pathway amino-acid biosynthesis; L-histidine biosynthesis; L-histidine from 5-phospho-alpha-D-ribose 1-diphosphate: step 8/9. In Spirosoma linguale (strain ATCC 33905 / DSM 74 / LMG 10896 / Claus 1), this protein is Histidine biosynthesis bifunctional protein HisB.